The chain runs to 468 residues: Cysteine--tRNA ligase (468 aa).

Residue C27 coordinates Zn(2+). A 'HIGH' region motif is present at residues 29–39 (PTVYDDAHLGH). C204, H234, and E238 together coordinate Zn(2+). Residues 266 to 270 (KMSKS) carry the 'KMSKS' region motif. K269 is a binding site for ATP.

It belongs to the class-I aminoacyl-tRNA synthetase family. Monomer. Zn(2+) is required as a cofactor.

The protein resides in the cytoplasm. The enzyme catalyses tRNA(Cys) + L-cysteine + ATP = L-cysteinyl-tRNA(Cys) + AMP + diphosphate. This chain is Cysteine--tRNA ligase, found in Campylobacter hominis (strain ATCC BAA-381 / DSM 21671 / CCUG 45161 / LMG 19568 / NCTC 13146 / CH001A).